A 380-amino-acid polypeptide reads, in one-letter code: Cytochrome b (380 aa).

The next 4 membrane-spanning stretches (helical) occupy residues 34 to 54, 78 to 99, 114 to 134, and 179 to 199; these read FGSL…LLAT, WLIR…YLHI, WNTG…GYVL, and FFAL…IHLA. Heme b contacts are provided by His-84 and His-98. Residues His-183 and His-197 each coordinate heme b. His-202 lines the a ubiquinone pocket. 4 helical membrane-spanning segments follow: residues 227 to 247, 289 to 309, 321 to 341, and 348 to 368; these read LKDI…ALFS, LGGV…PFLH, LSQI…WIGS, and FIII…ILFP.

Belongs to the cytochrome b family. As to quaternary structure, the cytochrome bc1 complex contains 11 subunits: 3 respiratory subunits (MT-CYB, CYC1 and UQCRFS1), 2 core proteins (UQCRC1 and UQCRC2) and 6 low-molecular weight proteins (UQCRH/QCR6, UQCRB/QCR7, UQCRQ/QCR8, UQCR10/QCR9, UQCR11/QCR10 and a cleavage product of UQCRFS1). This cytochrome bc1 complex then forms a dimer. Heme b is required as a cofactor.

The protein localises to the mitochondrion inner membrane. Component of the ubiquinol-cytochrome c reductase complex (complex III or cytochrome b-c1 complex) that is part of the mitochondrial respiratory chain. The b-c1 complex mediates electron transfer from ubiquinol to cytochrome c. Contributes to the generation of a proton gradient across the mitochondrial membrane that is then used for ATP synthesis. This is Cytochrome b (MT-CYB) from Callipepla gambelii (Gambel's quail).